The following is a 194-amino-acid chain: 3-isopropylmalate dehydratase small subunit (194 aa).

It belongs to the LeuD family. LeuD type 1 subfamily. As to quaternary structure, heterodimer of LeuC and LeuD.

It carries out the reaction (2R,3S)-3-isopropylmalate = (2S)-2-isopropylmalate. Its pathway is amino-acid biosynthesis; L-leucine biosynthesis; L-leucine from 3-methyl-2-oxobutanoate: step 2/4. Its function is as follows. Catalyzes the isomerization between 2-isopropylmalate and 3-isopropylmalate, via the formation of 2-isopropylmaleate. This chain is 3-isopropylmalate dehydratase small subunit, found in Anoxybacillus flavithermus (strain DSM 21510 / WK1).